Consider the following 427-residue polypeptide: UDP-N-acetylglucosamine--N-acetylmuramyl-(pentapeptide) pyrophosphoryl-undecaprenol N-acetylglucosamine transferase (427 aa).

Residues 29–31, N141, R177, S205, I258, and Q303 contribute to the UDP-N-acetyl-alpha-D-glucosamine site; that span reads TGG. A disordered region spans residues 408–427; it reads SLHPIPDSRFPIRTSAGGAQ.

Belongs to the glycosyltransferase 28 family. MurG subfamily.

The protein localises to the cell inner membrane. It carries out the reaction di-trans,octa-cis-undecaprenyl diphospho-N-acetyl-alpha-D-muramoyl-L-alanyl-D-glutamyl-meso-2,6-diaminopimeloyl-D-alanyl-D-alanine + UDP-N-acetyl-alpha-D-glucosamine = di-trans,octa-cis-undecaprenyl diphospho-[N-acetyl-alpha-D-glucosaminyl-(1-&gt;4)]-N-acetyl-alpha-D-muramoyl-L-alanyl-D-glutamyl-meso-2,6-diaminopimeloyl-D-alanyl-D-alanine + UDP + H(+). It functions in the pathway cell wall biogenesis; peptidoglycan biosynthesis. In terms of biological role, cell wall formation. Catalyzes the transfer of a GlcNAc subunit on undecaprenyl-pyrophosphoryl-MurNAc-pentapeptide (lipid intermediate I) to form undecaprenyl-pyrophosphoryl-MurNAc-(pentapeptide)GlcNAc (lipid intermediate II). In Xanthomonas campestris pv. campestris (strain 8004), this protein is UDP-N-acetylglucosamine--N-acetylmuramyl-(pentapeptide) pyrophosphoryl-undecaprenol N-acetylglucosamine transferase.